Here is a 464-residue protein sequence, read N- to C-terminus: ATP synthase subunit beta (464 aa).

154–161 (GGAGVGKT) lines the ATP pocket.

This sequence belongs to the ATPase alpha/beta chains family. As to quaternary structure, F-type ATPases have 2 components, CF(1) - the catalytic core - and CF(0) - the membrane proton channel. CF(1) has five subunits: alpha(3), beta(3), gamma(1), delta(1), epsilon(1). CF(0) has three main subunits: a(1), b(2) and c(9-12). The alpha and beta chains form an alternating ring which encloses part of the gamma chain. CF(1) is attached to CF(0) by a central stalk formed by the gamma and epsilon chains, while a peripheral stalk is formed by the delta and b chains.

It localises to the cell membrane. It carries out the reaction ATP + H2O + 4 H(+)(in) = ADP + phosphate + 5 H(+)(out). Functionally, produces ATP from ADP in the presence of a proton gradient across the membrane. The catalytic sites are hosted primarily by the beta subunits. The sequence is that of ATP synthase subunit beta from Mycoplasmopsis synoviae (strain 53) (Mycoplasma synoviae).